The chain runs to 425 residues: Putative TRAP transporter large permease protein HI_1029 (425 aa).

The next 13 helical transmembrane spans lie at 3–23, 24–44, 54–74, 93–113, 139–159, 169–189, 217–237, 241–261, 275–295, 312–332, 334–354, 355–375, and 399–419; these read VIIF…VAFA, LLIC…QILA, FSLM…EGGL, LGFV…SAVA, LIGT…FIVF, KLFL…AILW, VWAL…IFTP, GVVA…ELPL, TAVV…ITVA, PTIL…VMDL, PTVL…GIDP, VYFG…PPVG, and YLGM…LILM.

Belongs to the TRAP transporter large permease family.

The protein resides in the cell inner membrane. The polypeptide is Putative TRAP transporter large permease protein HI_1029 (Haemophilus influenzae (strain ATCC 51907 / DSM 11121 / KW20 / Rd)).